The sequence spans 524 residues: BEL1-like homeodomain protein 3 (524 aa).

The interval 171–187 (SRYLKPTQQLLDEVVSV) is SR/KY domain. Basic and acidic residues-rich tracts occupy residues 195–205 (NKKMKNDKGQD) and 216–235 (EDDK…ELQS). The disordered stretch occupies residues 195-236 (NKKMKNDKGQDFHNGSSDNITEDDKSQSQELSPSERQELQSK). The interval 229-300 (ERQELQSKKS…CLRDAIKEQI (72 aa)) is BELL domain. Positions 346 to 408 (AWRPQRGLPE…NARVRLWKPM (63 aa)) form a DNA-binding region, homeobox. The segment at 429 to 463 (QDTKKMQETSQLKHEDSSSSQQQNQGNNNNNIPYT) is disordered. Over residues 430 to 445 (DTKKMQETSQLKHEDS) the composition is skewed to basic and acidic residues. Residues 446-459 (SSSQQQNQGNNNNN) show a composition bias toward low complexity.

It belongs to the TALE/BELL homeobox family. In terms of assembly, may form heterodimeric complex with the TALE/KNOX protein STM. Interacts with OFP1, OFP2, OFP3, OFP4, OFP5 and OFP15.

It is found in the nucleus. In terms of biological role, transcription factor that is responsive of the nuclear import of SHOOT MERISTEMLESS (STM). This chain is BEL1-like homeodomain protein 3 (BLH3), found in Arabidopsis thaliana (Mouse-ear cress).